The chain runs to 149 residues: MERTFLMIKPDGVQRNLVGEIIQRFETKGFTLVGLKMMQVSSELAEKHYAVHKERPFFRSLVDFITSSPVVAMVWQGEGVIASARKIIGATNPLNAEPGTIRGDFGISVGRNLIHGSDGPDTAKDEVSLWFSDAELANWTPAITPWVVE.

ATP-binding residues include lysine 9, phenylalanine 57, arginine 85, threonine 91, arginine 102, and asparagine 112. Catalysis depends on histidine 115, which acts as the Pros-phosphohistidine intermediate.

The protein belongs to the NDK family. As to quaternary structure, homotetramer. The cofactor is Mg(2+).

Its subcellular location is the cytoplasm. It carries out the reaction a 2'-deoxyribonucleoside 5'-diphosphate + ATP = a 2'-deoxyribonucleoside 5'-triphosphate + ADP. The enzyme catalyses a ribonucleoside 5'-diphosphate + ATP = a ribonucleoside 5'-triphosphate + ADP. Functionally, major role in the synthesis of nucleoside triphosphates other than ATP. The ATP gamma phosphate is transferred to the NDP beta phosphate via a ping-pong mechanism, using a phosphorylated active-site intermediate. The sequence is that of Nucleoside diphosphate kinase from Microcystis aeruginosa (strain NIES-843 / IAM M-2473).